A 138-amino-acid chain; its full sequence is Phospholipase A2 EC3 (138 aa).

Residues 1 to 16 (MRTLWIVAVWLMGVEG) form the signal peptide. Intrachain disulfides connect C42-C131, C44-C60, C59-C111, C65-C138, C66-C104, C73-C97, and C91-C102. Ca(2+) is bound by residues Y43, G45, and G47. Residue H63 is part of the active site. Ca(2+) is bound at residue D64. The active site involves D105.

The protein belongs to the phospholipase A2 family. Group II subfamily. Requires Ca(2+) as cofactor.

The protein resides in the secreted. It catalyses the reaction a 1,2-diacyl-sn-glycero-3-phosphocholine + H2O = a 1-acyl-sn-glycero-3-phosphocholine + a fatty acid + H(+). Its function is as follows. PA2 catalyzes the calcium-dependent hydrolysis of the 2-acyl groups in 3-sn-phosphoglycerides. This is Phospholipase A2 EC3 from Echis coloratus (Carpet viper).